The sequence spans 907 residues: Dual serine/threonine and tyrosine protein kinase (907 aa).

Residues 373–409 adopt a coiled-coil conformation; the sequence is RKKENELYESLMNIANRKQEEMKDMIVETLNTMKEEL. A Protein kinase domain is found at 630–884; that stretch reads PKLGQELGRG…PLLGIVQPML (255 aa). Residues 636–644 and lysine 659 contribute to the ATP site; that span reads LGRGQYGVV. The active-site Proton acceptor is aspartate 755.

This sequence belongs to the protein kinase superfamily. Ser/Thr protein kinase family.

The protein resides in the cytoplasm. It localises to the cell membrane. The protein localises to the apical cell membrane. It is found in the basolateral cell membrane. Its subcellular location is the cell junction. The enzyme catalyses L-seryl-[protein] + ATP = O-phospho-L-seryl-[protein] + ADP + H(+). The catalysed reaction is L-threonyl-[protein] + ATP = O-phospho-L-threonyl-[protein] + ADP + H(+). It carries out the reaction L-tyrosyl-[protein] + ATP = O-phospho-L-tyrosyl-[protein] + ADP + H(+). Acts as a positive regulator of ERK phosphorylation downstream of fibroblast growth factor-receptor activation. Involved in the regulation of both caspase-dependent apoptosis and caspase-independent cell death. In the skin, it plays a predominant role in suppressing caspase-dependent apoptosis in response to UV stress in a range of dermal cell types. In Macaca mulatta (Rhesus macaque), this protein is Dual serine/threonine and tyrosine protein kinase.